The chain runs to 369 residues: N-succinyl-L-Arg/Lys racemase (369 aa).

Residues Tyr-26, Asp-51, Lys-161–Lys-163, and Asp-191–Asn-193 each bind substrate. The Mg(2+) site is built by Asp-191, Glu-218, and Asp-243. Substrate-binding positions include Lys-267, Ser-295–Met-296, and Glu-320–Thr-322.

This sequence belongs to the mandelate racemase/muconate lactonizing enzyme family. Mg(2+) is required as a cofactor.

In terms of biological role, catalyzes efficient racemization of N-succinyl-L-Arg and N-succinyl-L-Lys, suggesting that these are physiological substrates of this enzyme. Has low activity with L-Asp-L-Lys, and even lower activity with L-Leu-L-Arg, L-Leu-L-Lys, N-succinyl-L-His and N-succinyl-L-Met (in vitro). In Bacillus cereus (strain ATCC 14579 / DSM 31 / CCUG 7414 / JCM 2152 / NBRC 15305 / NCIMB 9373 / NCTC 2599 / NRRL B-3711), this protein is N-succinyl-L-Arg/Lys racemase.